A 48-amino-acid chain; its full sequence is Disintegrin accutin (48 aa).

Gln1 is subject to Pyrrolidone carboxylic acid. The 48-residue stretch at 1 to 48 (QGAQCTAGPCCWPCKFLKEGTICRRARGDDLDDYCNGISADCPRNPYY) folds into the Disintegrin domain. 3 cysteine pairs are disulfide-bonded: Cys5/Cys11, Cys10/Cys35, and Cys23/Cys42. The Cell attachment site signature appears at 27–29 (RGD).

This sequence belongs to the venom metalloproteinase (M12B) family. P-II subfamily. P-IIa sub-subfamily. As to quaternary structure, monomer (disintegrin). Expressed by the venom gland.

It localises to the secreted. Inhibit human platelet aggregation induced by ADP, collagen, thrombin or the thromboxane analog U46619 in platelet suspension with IC(50) values of 66-267 nM. Acts by inhibiting fibrinogen interaction with platelet receptors GPIIb/GPIIIa (ITGA2B/ITGB3). It also inhibits angiogenesis in vivo and in vitro by blocking integrin alpha-V/beta-3 (ITGAV/ITGB3) of endothelial cells and by inducing apoptosis. This chain is Disintegrin accutin, found in Deinagkistrodon acutus (Hundred-pace snake).